The primary structure comprises 203 residues: Nucleoside triphosphate pyrophosphatase (203 aa).

The active-site Proton acceptor is Asp77.

The protein belongs to the Maf family. Requires a divalent metal cation as cofactor.

It is found in the cytoplasm. It catalyses the reaction a ribonucleoside 5'-triphosphate + H2O = a ribonucleoside 5'-phosphate + diphosphate + H(+). The enzyme catalyses a 2'-deoxyribonucleoside 5'-triphosphate + H2O = a 2'-deoxyribonucleoside 5'-phosphate + diphosphate + H(+). Functionally, nucleoside triphosphate pyrophosphatase. May have a dual role in cell division arrest and in preventing the incorporation of modified nucleotides into cellular nucleic acids. In Rickettsia felis (strain ATCC VR-1525 / URRWXCal2) (Rickettsia azadi), this protein is Nucleoside triphosphate pyrophosphatase.